The chain runs to 1399 residues: DNA-directed RNA polymerase subunit beta' (1399 aa).

Residues Cys70, Cys72, Cys85, and Cys88 each contribute to the Zn(2+) site. Residues Asp460, Asp462, and Asp464 each contribute to the Mg(2+) site. 4 residues coordinate Zn(2+): Cys814, Cys888, Cys895, and Cys898.

Belongs to the RNA polymerase beta' chain family. As to quaternary structure, the RNAP catalytic core consists of 2 alpha, 1 beta, 1 beta' and 1 omega subunit. When a sigma factor is associated with the core the holoenzyme is formed, which can initiate transcription. Mg(2+) serves as cofactor. Zn(2+) is required as a cofactor.

The catalysed reaction is RNA(n) + a ribonucleoside 5'-triphosphate = RNA(n+1) + diphosphate. In terms of biological role, DNA-dependent RNA polymerase catalyzes the transcription of DNA into RNA using the four ribonucleoside triphosphates as substrates. This Pseudomonas savastanoi pv. phaseolicola (strain 1448A / Race 6) (Pseudomonas syringae pv. phaseolicola (strain 1448A / Race 6)) protein is DNA-directed RNA polymerase subunit beta'.